The chain runs to 410 residues: Acetate kinase (410 aa).

Residue Asn7 coordinates Mg(2+). Residue Lys14 participates in ATP binding. Arg98 contributes to the substrate binding site. The Proton donor/acceptor role is filled by Asp155. ATP is bound by residues 215–219 (HLGNG), 290–292 (DMR), and 338–342 (GIGEN). Glu392 is a binding site for Mg(2+).

Belongs to the acetokinase family. As to quaternary structure, homodimer. Mg(2+) serves as cofactor. It depends on Mn(2+) as a cofactor.

The protein resides in the cytoplasm. The catalysed reaction is acetate + ATP = acetyl phosphate + ADP. It functions in the pathway metabolic intermediate biosynthesis; acetyl-CoA biosynthesis; acetyl-CoA from acetate: step 1/2. In terms of biological role, catalyzes the formation of acetyl phosphate from acetate and ATP. Can also catalyze the reverse reaction. The polypeptide is Acetate kinase (Kocuria rhizophila (strain ATCC 9341 / DSM 348 / NBRC 103217 / DC2201)).